The sequence spans 719 residues: ATP-dependent RNA helicase p62 (719 aa).

The tract at residues 94–234 (AQSQRAFRDS…GSQDLPMRPV (141 aa)) is disordered. Basic and acidic residues-rich tracts occupy residues 99-108 (AFRDSSKPDS) and 137-171 (EEIK…DRRG). Positions 172–188 (GGGGGNRFGGGGGGGDY) are enriched in gly residues. Basic and acidic residues predominate over residues 194-205 (GRVEKRRDDRGG). Over residues 206-226 (GNRFGGGGGFGDRRGGGGGGS) the composition is skewed to gly residues. A Q motif motif is present at residues 281 to 309 (QDFSEVHLPDYVMKEIRRQGYKAPTAIQA). The 176-residue stretch at 312–487 (WPIAMSGSNF…EDFLGNYIQI (176 aa)) folds into the Helicase ATP-binding domain. 325–332 (AKTGSGKT) contacts ATP. Positions 435–438 (DEAD) match the DEAD box motif. A Helicase C-terminal domain is found at 519 to 664 (LLSDIYDTSE…EINPALENLA (146 aa)). Positions 689–719 (GGGFKKGSLSNGRGFGGGGGGGGEGRHSRFD) are disordered. A compositionally biased stretch (gly residues) spans 701–711 (RGFGGGGGGGG).

Belongs to the DEAD box helicase family. DDX5/DBP2 subfamily. As to quaternary structure, interacts with Fmr1 to form the RNA-induced silencing complex (RISC), a ribonucleoprotein (RNP) complex involved in translation regulation, other components of the complex are RpL5, RpL11, AGO2 and Dcr-1.

The protein resides in the nucleus. It is found in the nucleolus. The protein localises to the cytoplasm. Its subcellular location is the cytosol. The enzyme catalyses ATP + H2O = ADP + phosphate + H(+). Functionally, as an RNA helicase, unwinds RNA and alters RNA structures through ATP binding and hydrolysis. Involved in multiple cellular processes, including pre-mRNA splicing, alternative splicing, rRNA processing and miRNA processing, as well as transcription regulation. Plays a role in innate immunity. Specifically restricts bunyavirus infection, including Rift Valley fever virus (RVFV) or La Crosse virus (LACV), but not vesicular stomatitis virus (VSV), in an interferon- and DROSHA-independent manner. This Drosophila melanogaster (Fruit fly) protein is ATP-dependent RNA helicase p62 (Rm62).